We begin with the raw amino-acid sequence, 172 residues long: Myosin regulatory light chain 12B (172 aa).

The span at 1–16 (MSSKKAKTKTTKKRPQ) shows a compositional bias: basic residues. The tract at residues 1–20 (MSSKKAKTKTTKKRPQRATS) is disordered. The residue at position 19 (Thr-19) is a Phosphothreonine; by MLCK and ZIPK/DAPK3. Ser-20 bears the Phosphoserine; by MLCK and ZIPK/DAPK3 mark. 3 consecutive EF-hand domains span residues 29–64 (SQIQEFKEAFNMIDQNRDGFIDKEDLHDMLASLGKN), 98–133 (DPEDVIRNAFACFDEEATGTIQEDYLRELLTTMGDR), and 134–169 (FTDEEVDELYREAPIDKKGNFNYIEFTRILKHGAKD). Asp-42, Asn-44, Asp-46, and Asp-53 together coordinate Ca(2+).

Myosin is a hexamer of 2 heavy chains and 4 light chains: interacts with myosin heavy chain MYO19. In terms of processing, phosphorylation increases the actin-activated myosin ATPase activity and thereby regulates the contractile activity. It is required to generate the driving force in the migration of the cells but not necessary for localization of myosin-2 at the leading edge. Phosphorylation is reduced following epigallocatechin-3-O-gallate treatment. Ubiquitously expressed in various hematopoietic cells.

Myosin regulatory subunit that plays an important role in regulation of both smooth muscle and nonmuscle cell contractile activity via its phosphorylation. Phosphorylation triggers actin polymerization in vascular smooth muscle. Implicated in cytokinesis, receptor capping, and cell locomotion. This is Myosin regulatory light chain 12B (MYL12B) from Homo sapiens (Human).